The chain runs to 216 residues: Small ribosomal subunit protein uS3 (216 aa).

Residues 38 to 108 (LREFVKKKLH…DLAIDIQEVK (71 aa)) enclose the KH type-2 domain.

It belongs to the universal ribosomal protein uS3 family. In terms of assembly, part of the 30S ribosomal subunit. Forms a tight complex with proteins S10 and S14.

Its function is as follows. Binds the lower part of the 30S subunit head. Binds mRNA in the 70S ribosome, positioning it for translation. The sequence is that of Small ribosomal subunit protein uS3 from Desulfosudis oleivorans (strain DSM 6200 / JCM 39069 / Hxd3) (Desulfococcus oleovorans).